Consider the following 361-residue polypeptide: DNA replication and repair protein RecF (361 aa).

30–37 lines the ATP pocket; sequence GDNAQGKT.

The protein belongs to the RecF family.

It localises to the cytoplasm. In terms of biological role, the RecF protein is involved in DNA metabolism; it is required for DNA replication and normal SOS inducibility. RecF binds preferentially to single-stranded, linear DNA. It also seems to bind ATP. This chain is DNA replication and repair protein RecF, found in Clostridium botulinum (strain Eklund 17B / Type B).